The primary structure comprises 737 residues: MEIRGLLMGRLRLGRRMVPLGLLGVTALLLILPPFALVQGRHHELNNGAAIGSHQLSAAAGVGLASQSAQSGSLASGVMSSVPAAGASSSSSSSLLSSSAEDDVARITLSKDADAFFTPYIGHGESVRIIDAELGTLEHVHSGATPRRRGLTRRESNSDANDNDPLVVNTDKGRIRGITVDAPSGKKVDVWLGIPYAQPPVGPLRFRHPRPAEKWTGVLNTTTPPNSCVQIVDTVFGDFPGATMWNPNTPLSEDCLYINVVAPRPRPKNAAVMLWIFGGGFYSGTATLDVYDHRALASEENVIVVSLQYRVASLGFLFLGTPEAPGNAGLFDQNLALRWVRDNIHRFGGDPSRVTLFGESAGAVSVSLHLLSALSRDLFQRAILQSGSPTAPWALVSREEATLRALRLAEAVGCPHEPSKLSDAVECLRGKDPHVLVNNEWGTLGICEFPFVPVVDGAFLDETPQRSLASGRFKKTEILTGSNTEEGYYFIIYYLTELLRKEEGVTVTREEFLQAVRELNPYVNGAARQAIVFEYTDWTEPDNPNSNRDALDKMVGDYHFTCNVNEFAQRYAEEGNNVYMYLYTHRSKGNPWPRWTGVMHGDEINYVFGEPLNPTLGYTEDEKDFSRKIMRYWSNFAKTGNPNPNTASSEFPEWPKHTAHGRHYLELGLNTSFVGRGPRLRQCAFWKKYLPQLVAATSNLPGPAPPSEPCESSAFFYRPDLIVLLVSLLTATVRFIQ.

Positions 1 to 38 (MEIRGLLMGRLRLGRRMVPLGLLGVTALLLILPPFALV) are cleaved as a signal peptide. Residues 141 to 168 (HSGATPRRRGLTRRESNSDANDNDPLVV) form a disordered region. Asparagine 220 carries an N-linked (GlcNAc...) asparagine glycan. The cysteines at positions 228 and 255 are disulfide-linked. Serine 360 acts as the Acyl-ester intermediate in catalysis. A disulfide bond links cysteine 414 and cysteine 427. Catalysis depends on charge relay system residues glutamate 486 and histidine 600. A disulfide bridge links cysteine 562 with cysteine 683. Asparagine 670 carries N-linked (GlcNAc...) asparagine glycosylation.

It belongs to the type-B carboxylesterase/lipase family.

The protein resides in the synapse. The catalysed reaction is acetylcholine + H2O = choline + acetate + H(+). Functionally, rapidly hydrolyzes choline released into the synapse. This chain is Acetylcholinesterase (Ace), found in Anopheles gambiae (African malaria mosquito).